Here is a 154-residue protein sequence, read N- to C-terminus: Probable transcription factor At4g00232 (154 aa).

The interval 1–44 is disordered; the sequence is MDKANTNRSKVCGGSGEAKLTGKKRKNVSAKQSKKDAKKENSQM.

Belongs to the GeBP family.

In Arabidopsis thaliana (Mouse-ear cress), this protein is Probable transcription factor At4g00232.